A 217-amino-acid polypeptide reads, in one-letter code: MEHSTWHRKIKESLPPDYFARINQFLDQVYSQGRVYPKREHIFKALTETPYEDLKVLILGQDPYHGPGQAQGLSFSVPDSIAAPPSLQNILKELSEDIGKRDHHDLTSWAKQGVLLLNACLTVPEHQANAHAGLIWEPFTDAVIQLANAKESPVVFILWGGFARKKKAFITNPKHLVIESAHPSPLSAYRGFFGSRPFSKCNAFLKENQLEPIDWLQ.

The Proton acceptor role is filled by Asp-62.

The protein belongs to the uracil-DNA glycosylase (UDG) superfamily. UNG family.

Its subcellular location is the cytoplasm. It catalyses the reaction Hydrolyzes single-stranded DNA or mismatched double-stranded DNA and polynucleotides, releasing free uracil.. Its function is as follows. Excises uracil residues from the DNA which can arise as a result of misincorporation of dUMP residues by DNA polymerase or due to deamination of cytosine. This Streptococcus uberis (strain ATCC BAA-854 / 0140J) protein is Uracil-DNA glycosylase.